Consider the following 320-residue polypeptide: tRNA N6-adenosine threonylcarbamoyltransferase (320 aa).

Positions 113 and 117 each coordinate Fe cation. Residues 143 to 147 (VVSGG), Asp-176, Gly-189, Asp-193, and Asn-281 contribute to the substrate site. Asp-305 contributes to the Fe cation binding site.

The protein belongs to the KAE1 / TsaD family. Fe(2+) is required as a cofactor.

It localises to the cytoplasm. The catalysed reaction is L-threonylcarbamoyladenylate + adenosine(37) in tRNA = N(6)-L-threonylcarbamoyladenosine(37) in tRNA + AMP + H(+). Its function is as follows. Required for the formation of a threonylcarbamoyl group on adenosine at position 37 (t(6)A37) in tRNAs that read codons beginning with adenine. Is involved in the transfer of the threonylcarbamoyl moiety of threonylcarbamoyl-AMP (TC-AMP) to the N6 group of A37, together with TsaE and TsaB. TsaD likely plays a direct catalytic role in this reaction. In Mycoplasmoides gallisepticum (strain R(low / passage 15 / clone 2)) (Mycoplasma gallisepticum), this protein is tRNA N6-adenosine threonylcarbamoyltransferase.